Reading from the N-terminus, the 122-residue chain is MPPKPSAKGAKKAAKTVTKPKDGKKRRHARKESYSVYIYRVLKQVHPDTGVSSKAMSIMNSFVNDVFERIAAEASRLAHYNKRSTISSREIQTAVRLILPGELAKHAVSEGTKAVTKYTSSK.

Positions 1 to 30 (MPPKPSAKGAKKAAKTVTKPKDGKKRRHAR) are disordered. S109 carries O-linked (GlcNAc) serine glycosylation. K117 participates in a covalent cross-link: Glycyl lysine isopeptide (Lys-Gly) (interchain with G-Cter in ubiquitin).

The protein belongs to the histone H2B family. As to quaternary structure, the nucleosome is a histone octamer containing two molecules each of H2A, H2B, H3 and H4 assembled in one H3-H4 heterotetramer and two H2A-H2B heterodimers. The octamer wraps approximately 147 bp of DNA. Post-translationally, monoubiquitination of Lys-117 gives a specific tag for epigenetic transcriptional activation and is also prerequisite for histone H3 'Lys-4' and 'Lys-79' methylation. GlcNAcylation at Ser-109 promotes monoubiquitination of Lys-117. It fluctuates in response to extracellular glucose, and associates with transcribed genes.

Its subcellular location is the nucleus. The protein localises to the chromosome. Its function is as follows. Core component of nucleosome. Nucleosomes wrap and compact DNA into chromatin, limiting DNA accessibility to the cellular machineries which require DNA as a template. Histones thereby play a central role in transcription regulation, DNA repair, DNA replication and chromosomal stability. DNA accessibility is regulated via a complex set of post-translational modifications of histones, also called histone code, and nucleosome remodeling. The protein is Histone H2B 1 (his-11) of Caenorhabditis elegans.